Consider the following 96-residue polypeptide: Plasminogen-like protein B (96 aa).

The N-terminal stretch at 1–19 is a signal peptide; the sequence is MEHKEVVLLLLLFLKSGQG. The region spanning 20 to 96 is the PAN domain; it reads EPLDDYVNTQ…RMRDAVLFEK (77 aa). 2 cysteine pairs are disulfide-bonded: Cys-49–Cys-73 and Cys-53–Cys-61.

The protein localises to the secreted. Functionally, may bind noncovalently to lysine binding sites present in the kringle structures of plasminogen. This may interfere with the binding of fibrin or alpha-2-antiplasmin to plasminogen and may result in the localization of activity at sites necessary for extracellular matrix destruction. The protein is Plasminogen-like protein B (PLGLB1) of Homo sapiens (Human).